A 636-amino-acid chain; its full sequence is DNA gyrase subunit B (636 aa).

One can recognise a Toprim domain in the interval T421–P535. Mg(2+) contacts are provided by E427, D500, and D502.

It belongs to the type II topoisomerase GyrB family. Heterotetramer, composed of two GyrA and two GyrB chains. In the heterotetramer, GyrA contains the active site tyrosine that forms a transient covalent intermediate with DNA, while GyrB binds cofactors and catalyzes ATP hydrolysis. Requires Mg(2+) as cofactor. Mn(2+) is required as a cofactor. Ca(2+) serves as cofactor.

Its subcellular location is the cytoplasm. It catalyses the reaction ATP-dependent breakage, passage and rejoining of double-stranded DNA.. In terms of biological role, a type II topoisomerase that negatively supercoils closed circular double-stranded (ds) DNA in an ATP-dependent manner to modulate DNA topology and maintain chromosomes in an underwound state. Negative supercoiling favors strand separation, and DNA replication, transcription, recombination and repair, all of which involve strand separation. Also able to catalyze the interconversion of other topological isomers of dsDNA rings, including catenanes and knotted rings. Type II topoisomerases break and join 2 DNA strands simultaneously in an ATP-dependent manner. In Thermotoga maritima (strain ATCC 43589 / DSM 3109 / JCM 10099 / NBRC 100826 / MSB8), this protein is DNA gyrase subunit B.